The following is a 341-amino-acid chain: Ketol-acid reductoisomerase (NADP(+)) (341 aa).

The 182-residue stretch at 1–182 (MATIYYDKDA…GCTRAGVLET (182 aa)) folds into the KARI N-terminal Rossmann domain. Residues 25 to 28 (YGSQ), Ser-51, Ser-53, and 83 to 86 (DQTQ) each bind NADP(+). The active site involves His-108. NADP(+) is bound at residue Gly-134. In terms of domain architecture, KARI C-terminal knotted spans 183–328 (TFKEETETDL…KRLRDMMSWI (146 aa)). Mg(2+) is bound by residues Asp-191, Glu-195, Glu-227, and Glu-231. Ser-252 is a binding site for substrate.

It belongs to the ketol-acid reductoisomerase family. Mg(2+) is required as a cofactor.

The catalysed reaction is (2R)-2,3-dihydroxy-3-methylbutanoate + NADP(+) = (2S)-2-acetolactate + NADPH + H(+). It carries out the reaction (2R,3R)-2,3-dihydroxy-3-methylpentanoate + NADP(+) = (S)-2-ethyl-2-hydroxy-3-oxobutanoate + NADPH + H(+). The protein operates within amino-acid biosynthesis; L-isoleucine biosynthesis; L-isoleucine from 2-oxobutanoate: step 2/4. It functions in the pathway amino-acid biosynthesis; L-valine biosynthesis; L-valine from pyruvate: step 2/4. Involved in the biosynthesis of branched-chain amino acids (BCAA). Catalyzes an alkyl-migration followed by a ketol-acid reduction of (S)-2-acetolactate (S2AL) to yield (R)-2,3-dihydroxy-isovalerate. In the isomerase reaction, S2AL is rearranged via a Mg-dependent methyl migration to produce 3-hydroxy-3-methyl-2-ketobutyrate (HMKB). In the reductase reaction, this 2-ketoacid undergoes a metal-dependent reduction by NADPH to yield (R)-2,3-dihydroxy-isovalerate. The polypeptide is Ketol-acid reductoisomerase (NADP(+)) (Anaeromyxobacter sp. (strain K)).